Consider the following 492-residue polypeptide: 6-phosphogluconate dehydrogenase, decarboxylating 2 (492 aa).

NADP(+) is bound by residues 12–17 (GLAVMG), 35–37 (NRT), 77–79 (IKA), and N105. Substrate is bound by residues N105 and 131–133 (SGG). Residue K185 is the Proton acceptor of the active site. 188–189 (HN) is a binding site for substrate. The active-site Proton donor is the E192. Y193, K262, R289, R449, and H455 together coordinate substrate.

The protein belongs to the 6-phosphogluconate dehydrogenase family. Homodimer.

It carries out the reaction 6-phospho-D-gluconate + NADP(+) = D-ribulose 5-phosphate + CO2 + NADPH. It participates in carbohydrate degradation; pentose phosphate pathway; D-ribulose 5-phosphate from D-glucose 6-phosphate (oxidative stage): step 3/3. Its function is as follows. Catalyzes the oxidative decarboxylation of 6-phosphogluconate to ribulose 5-phosphate and CO(2), with concomitant reduction of NADP to NADPH. The polypeptide is 6-phosphogluconate dehydrogenase, decarboxylating 2 (GND2) (Saccharomyces cerevisiae (strain ATCC 204508 / S288c) (Baker's yeast)).